Reading from the N-terminus, the 185-residue chain is MISDVLSDATTRMGKAVDAAKTDFSTVRTGRANPALFSSLLVAYYGTPTPLQQLASFQTPEARTLLITPYDRSALNDIEKALRDSDIGANPANDGNVIRVVMPELTEERRKEYVKIVHGKAEDARVSVRNVRRHAKEAIEKLVKDGDVGEDDGKRGEKDLDAATKKHIDQVDELLKNKEAELLGA.

This sequence belongs to the RRF family.

It is found in the cytoplasm. Functionally, responsible for the release of ribosomes from messenger RNA at the termination of protein biosynthesis. May increase the efficiency of translation by recycling ribosomes from one round of translation to another. The chain is Ribosome-recycling factor from Kocuria rhizophila (strain ATCC 9341 / DSM 348 / NBRC 103217 / DC2201).